The primary structure comprises 412 residues: Indian hedgehog B protein (412 aa).

An N-terminal signal peptide occupies residues 1-23 (MRLSTAAALLTGFILAFSPAYDG). A lipid anchor (N-palmitoyl cysteine) is attached at Cys24. The Ca(2+) site is built by Glu89, Glu90, Asp95, Thr125, Glu126, Asp129, and Asp131. Positions 140, 147, and 182 each coordinate Zn(2+). Residue Gly197 is the site of Cholesterol glycine ester attachment.

The protein belongs to the hedgehog family. As to quaternary structure, multimer. Interacts with BOC and CDON. Interacts with PTCH1. Interacts with glypican GPC3. In terms of processing, cholesterylation is required for N-product targeting to lipid rafts and multimerization. Post-translationally, the C-terminal domain displays an autoproteolysis activity and a cholesterol transferase activity. Both activities result in the cleavage of the full-length protein and covalent attachment of a cholesterol moiety to the C-terminal of the newly generated N-product. The N-product is the active species in both local and long-range signaling, whereas the C-product is degraded in the endoplasmic reticulum. N-palmitoylation by HHAT of N-product is required for indian hedgehog protein N-product multimerization and full activity. In terms of tissue distribution, expressed exclusively in the notochord.

The protein resides in the cell membrane. It is found in the endoplasmic reticulum membrane. The protein localises to the golgi apparatus membrane. It localises to the secreted. The catalysed reaction is glycyl-L-cysteinyl-[protein] + cholesterol + H(+) = [protein]-C-terminal glycyl cholesterol ester + N-terminal L-cysteinyl-[protein]. Its function is as follows. Signal involved in the early induction and patterning of anterodorsal ectoderm, nervous system and somites. It is involved in the regulation of endochondral skeleton formation, and the development of retinal pigment epithelium (RPE), photoreceptors and periocular tissues. The C-terminal part of the indian hedgehog protein precursor displays an autoproteolysis and a cholesterol transferase activity. Both activities result in the cleavage of the full-length protein into two parts followed by the covalent attachment of a cholesterol moiety to the C-terminal of the newly generated N-product. Both activities occur in the endoplasmic reticulum. Functionally, the dually lipidated indian hedgehog protein N-product is a morphogen which is essential for a variety of patterning events during development. Binds to the patched (PTCH1) receptor, which functions in association with smoothened (SMO), to activate the transcription of target genes. In the notochord, induces somite patterning and muscle pioneer differentiation. This chain is Indian hedgehog B protein (ihhb), found in Danio rerio (Zebrafish).